The sequence spans 131 residues: Small ribosomal subunit protein uS11 (131 aa).

This sequence belongs to the universal ribosomal protein uS11 family. Part of the 30S ribosomal subunit.

In terms of biological role, located on the platform of the 30S subunit. The sequence is that of Small ribosomal subunit protein uS11 from Methanospirillum hungatei JF-1 (strain ATCC 27890 / DSM 864 / NBRC 100397 / JF-1).